The sequence spans 354 residues: Heat-inducible transcription repressor HrcA (354 aa).

The protein belongs to the HrcA family.

In terms of biological role, negative regulator of class I heat shock genes (grpE-dnaK-dnaJ and groELS operons). Prevents heat-shock induction of these operons. In Novosphingobium aromaticivorans (strain ATCC 700278 / DSM 12444 / CCUG 56034 / CIP 105152 / NBRC 16084 / F199), this protein is Heat-inducible transcription repressor HrcA.